A 92-amino-acid chain; its full sequence is Small ribosomal subunit protein bS18 (92 aa).

The protein belongs to the bacterial ribosomal protein bS18 family. In terms of assembly, part of the 30S ribosomal subunit. Forms a tight heterodimer with protein bS6.

Functionally, binds as a heterodimer with protein bS6 to the central domain of the 16S rRNA, where it helps stabilize the platform of the 30S subunit. This Caulobacter sp. (strain K31) protein is Small ribosomal subunit protein bS18.